The following is a 524-amino-acid chain: 2-isopropylmalate synthase (524 aa).

The region spanning valine 15 to threonine 277 is the Pyruvate carboxyltransferase domain. Residues aspartate 24, histidine 212, histidine 214, and asparagine 248 each coordinate Mn(2+). The regulatory domain stretch occupies residues arginine 401–phenylalanine 524.

Belongs to the alpha-IPM synthase/homocitrate synthase family. LeuA type 1 subfamily. Homodimer. It depends on Mn(2+) as a cofactor.

It localises to the cytoplasm. The catalysed reaction is 3-methyl-2-oxobutanoate + acetyl-CoA + H2O = (2S)-2-isopropylmalate + CoA + H(+). Its pathway is amino-acid biosynthesis; L-leucine biosynthesis; L-leucine from 3-methyl-2-oxobutanoate: step 1/4. Functionally, catalyzes the condensation of the acetyl group of acetyl-CoA with 3-methyl-2-oxobutanoate (2-ketoisovalerate) to form 3-carboxy-3-hydroxy-4-methylpentanoate (2-isopropylmalate). This is 2-isopropylmalate synthase from Caulobacter sp. (strain K31).